The chain runs to 691 residues: Elongation factor G (691 aa).

The 275-residue stretch at 8 to 282 (ERVRNIGIAA…AVVDYLPAPI (275 aa)) folds into the tr-type G domain. GTP is bound by residues 17–24 (AHIDAGKT), 81–85 (DTPGH), and 135–138 (NKMD).

This sequence belongs to the TRAFAC class translation factor GTPase superfamily. Classic translation factor GTPase family. EF-G/EF-2 subfamily.

It is found in the cytoplasm. In terms of biological role, catalyzes the GTP-dependent ribosomal translocation step during translation elongation. During this step, the ribosome changes from the pre-translocational (PRE) to the post-translocational (POST) state as the newly formed A-site-bound peptidyl-tRNA and P-site-bound deacylated tRNA move to the P and E sites, respectively. Catalyzes the coordinated movement of the two tRNA molecules, the mRNA and conformational changes in the ribosome. This Thermosynechococcus vestitus (strain NIES-2133 / IAM M-273 / BP-1) protein is Elongation factor G.